A 1031-amino-acid chain; its full sequence is Putative protein TIC 214 N-terminal part (1031 aa).

6 helical membrane-spanning segments follow: residues 11–31 (ILWAQILSWISISGPLILFGL), 68–88 (TLGQLIILISIFYSPLYIMLL), 92–112 (AITLITLPYVLFYWYEIKDLS), 127–147 (GIIQIFLNSFLFQIFNPILLP), 166–186 (SFFVISLFCGWLGGNILLINL), and 212–232 (TFSIIIFVACLSYLGKFPVPF).

This sequence belongs to the TIC214 family. As to quaternary structure, part of the Tic complex.

Its subcellular location is the plastid. It is found in the chloroplast inner membrane. In terms of biological role, involved in protein precursor import into chloroplasts. May be part of an intermediate translocation complex acting as a protein-conducting channel at the inner envelope. This chain is Putative protein TIC 214 N-terminal part, found in Anthoceros angustus (Hornwort).